The primary structure comprises 475 residues: Ribulose bisphosphate carboxylase large chain (475 aa).

Residues 1–2 (MS) constitute a propeptide that is removed on maturation. Pro3 is modified (N-acetylproline). Substrate contacts are provided by Asn123 and Thr173. Lys175 functions as the Proton acceptor in the catalytic mechanism. Residue Lys177 participates in substrate binding. Mg(2+) contacts are provided by Lys201, Asp203, and Glu204. Lys201 carries the N6-carboxylysine modification. The Proton acceptor role is filled by His294. The substrate site is built by Arg295, His327, and Ser379.

It belongs to the RuBisCO large chain family. Type I subfamily. As to quaternary structure, heterohexadecamer of 8 large chains and 8 small chains; disulfide-linked. The disulfide link is formed within the large subunit homodimers. The cofactor is Mg(2+). Post-translationally, the disulfide bond which can form in the large chain dimeric partners within the hexadecamer appears to be associated with oxidative stress and protein turnover.

The protein localises to the plastid. Its subcellular location is the chloroplast. It carries out the reaction 2 (2R)-3-phosphoglycerate + 2 H(+) = D-ribulose 1,5-bisphosphate + CO2 + H2O. It catalyses the reaction D-ribulose 1,5-bisphosphate + O2 = 2-phosphoglycolate + (2R)-3-phosphoglycerate + 2 H(+). In terms of biological role, ruBisCO catalyzes two reactions: the carboxylation of D-ribulose 1,5-bisphosphate, the primary event in carbon dioxide fixation, as well as the oxidative fragmentation of the pentose substrate in the photorespiration process. Both reactions occur simultaneously and in competition at the same active site. This is Ribulose bisphosphate carboxylase large chain from Gnetum parvifolium (Small-leaved jointfir).